A 249-amino-acid chain; its full sequence is MRILIANDDGVYAPGLAALYDALADYAECTVVAPIQDMSGASSALTLDRPLHPVSMPNGFIGLNGSPTDCVHLGLNGLLEHTPDMVVSGINLGANLGDDVLYSGTVAAAIEGRFTGRPAFAFSLLSRLPDNLSTAAYIARALVEKHDRLELPPRTVLSVNVPNLPLDHIRGIQLTRLGHRSRAKPPVKQANPRGKEGYWISVAGDVEDGGPGTDFHAVMQGYVSITPLQLDRTFREAFDGLESWLENVL.

A divalent metal cation-binding residues include D8, D9, S39, and N91.

This sequence belongs to the SurE nucleotidase family. It depends on a divalent metal cation as a cofactor.

It localises to the cytoplasm. The catalysed reaction is a ribonucleoside 5'-phosphate + H2O = a ribonucleoside + phosphate. In terms of biological role, nucleotidase that shows phosphatase activity on nucleoside 5'-monophosphates. This is 5'-nucleotidase SurE from Stutzerimonas stutzeri (strain A1501) (Pseudomonas stutzeri).